The primary structure comprises 104 residues: uncharacterized protein (104 aa).

The interval 55–104 is disordered; that stretch reads RPFSSDRINRPFSPDKKGEPIFPDKRDRPFSPDRINRPFSPDKKGEPIFP.

The protein localises to the plastid. This is an uncharacterized protein from Euglena longa (Euglenophycean alga).